A 199-amino-acid polypeptide reads, in one-letter code: Probable nicotinate-nucleotide adenylyltransferase (199 aa).

Belongs to the NadD family.

It catalyses the reaction nicotinate beta-D-ribonucleotide + ATP + H(+) = deamido-NAD(+) + diphosphate. Its pathway is cofactor biosynthesis; NAD(+) biosynthesis; deamido-NAD(+) from nicotinate D-ribonucleotide: step 1/1. Functionally, catalyzes the reversible adenylation of nicotinate mononucleotide (NaMN) to nicotinic acid adenine dinucleotide (NaAD). This is Probable nicotinate-nucleotide adenylyltransferase from Roseiflexus sp. (strain RS-1).